The following is a 423-amino-acid chain: Glucose-1-phosphate adenylyltransferase (423 aa).

Alpha-D-glucose 1-phosphate contacts are provided by residues Tyr112, Gly177, 192 to 193 (EK), and Ser210.

The protein belongs to the bacterial/plant glucose-1-phosphate adenylyltransferase family. In terms of assembly, homotetramer.

It carries out the reaction alpha-D-glucose 1-phosphate + ATP + H(+) = ADP-alpha-D-glucose + diphosphate. The protein operates within glycan biosynthesis; glycogen biosynthesis. Its function is as follows. Involved in the biosynthesis of ADP-glucose, a building block required for the elongation reactions to produce glycogen. Catalyzes the reaction between ATP and alpha-D-glucose 1-phosphate (G1P) to produce pyrophosphate and ADP-Glc. The protein is Glucose-1-phosphate adenylyltransferase of Rhodospirillum rubrum (strain ATCC 11170 / ATH 1.1.1 / DSM 467 / LMG 4362 / NCIMB 8255 / S1).